The sequence spans 363 residues: Flagellar P-ring protein 2 (363 aa).

The first 18 residues, 1 to 18 (MLIRLLLLVICLAGPGVA), serve as a signal peptide directing secretion.

Belongs to the FlgI family. In terms of assembly, the basal body constitutes a major portion of the flagellar organelle and consists of four rings (L,P,S, and M) mounted on a central rod.

It is found in the periplasm. The protein localises to the bacterial flagellum basal body. Functionally, assembles around the rod to form the L-ring and probably protects the motor/basal body from shearing forces during rotation. The protein is Flagellar P-ring protein 2 of Cereibacter sphaeroides (strain ATCC 17023 / DSM 158 / JCM 6121 / CCUG 31486 / LMG 2827 / NBRC 12203 / NCIMB 8253 / ATH 2.4.1.) (Rhodobacter sphaeroides).